The sequence spans 331 residues: DNA double-strand break repair nuclease NurA (331 aa).

2 residues coordinate Mn(2+): D56 and D131.

The protein belongs to the NurA family. Homodimer. Interacts with SSB. Mn(2+) serves as cofactor.

The 5'-3' ssDNA and dsDNA exonuclease and ssDNA endonuclease activities are inhibited by SSB (single-stranded DNA-binding protein). Functionally, involved in DNA double-strand break (DSB) repair. Probably acts with HerA to stimulate resection of the 5' strand and produce the long 3' single-strand that is required for RadA loading. Exhibits both single-stranded endonuclease activity and 5'-3' exonuclease activity on single-stranded and double-stranded DNA. This is DNA double-strand break repair nuclease NurA from Sulfurisphaera tokodaii (strain DSM 16993 / JCM 10545 / NBRC 100140 / 7) (Sulfolobus tokodaii).